Here is a 304-residue protein sequence, read N- to C-terminus: N-acetylmuramic acid 6-phosphate etherase (304 aa).

One can recognise an SIS domain in the interval 62–225 (IVQAFQNGGR…TTASMVMIGK (164 aa)). Glu-90 acts as the Proton donor in catalysis. Residue Glu-121 is part of the active site.

The protein belongs to the GCKR-like family. MurNAc-6-P etherase subfamily. In terms of assembly, homodimer.

The enzyme catalyses N-acetyl-D-muramate 6-phosphate + H2O = N-acetyl-D-glucosamine 6-phosphate + (R)-lactate. Its pathway is amino-sugar metabolism; 1,6-anhydro-N-acetylmuramate degradation. It functions in the pathway amino-sugar metabolism; N-acetylmuramate degradation. It participates in cell wall biogenesis; peptidoglycan recycling. Functionally, specifically catalyzes the cleavage of the D-lactyl ether substituent of MurNAc 6-phosphate, producing GlcNAc 6-phosphate and D-lactate. Together with AnmK, is also required for the utilization of anhydro-N-acetylmuramic acid (anhMurNAc) either imported from the medium or derived from its own cell wall murein, and thus plays a role in cell wall recycling. This chain is N-acetylmuramic acid 6-phosphate etherase, found in Actinobacillus pleuropneumoniae serotype 5b (strain L20).